We begin with the raw amino-acid sequence, 488 residues long: 3-octaprenyl-4-hydroxybenzoate carboxy-lyase (488 aa).

Asn172 is a binding site for Mn(2+). Prenylated FMN contacts are provided by residues Ile175–Arg177, Arg189–Leu191, and Arg194–Gly195. Glu238 serves as a coordination point for Mn(2+). The Proton donor role is filled by Asp287.

The protein belongs to the UbiD family. Homohexamer. The cofactor is prenylated FMN. It depends on Mn(2+) as a cofactor.

The protein localises to the cell membrane. The enzyme catalyses a 4-hydroxy-3-(all-trans-polyprenyl)benzoate + H(+) = a 2-(all-trans-polyprenyl)phenol + CO2. Its pathway is cofactor biosynthesis; ubiquinone biosynthesis. Functionally, catalyzes the decarboxylation of 3-octaprenyl-4-hydroxy benzoate to 2-octaprenylphenol, an intermediate step in ubiquinone biosynthesis. This is 3-octaprenyl-4-hydroxybenzoate carboxy-lyase from Ectopseudomonas mendocina (strain ymp) (Pseudomonas mendocina).